Here is a 682-residue protein sequence, read N- to C-terminus: Transcription factor 12 (682 aa).

A 9aaTAD motif is present at residues 19-27; it reads DLLDFSAMF. Disordered regions lie at residues 25–122, 140–219, and 281–313; these read AMFS…LYSR, LGSP…PPTS, and SVSP…ASHT. Composition is skewed to polar residues over residues 30–48 and 56–76; these read PVNS…QFSG and GTTS…SRGF. A phosphoserine mark is found at Ser47, Ser67, and Ser79. Basic and acidic residues predominate over residues 81 to 93; sequence HYSDHLNDSRLGA. Phosphoserine is present on Ser98. Polar residues-rich tracts occupy residues 101 to 121 and 144 to 163; these read PFMN…SLYS and AQLS…SATS. Lys110 participates in a covalent cross-link: Glycyl lysine isopeptide (Lys-Gly) (interchain with G-Cter in SUMO2). Ser116 carries the phosphoserine modification. A leucine-zipper region spans residues 119–140; it reads LYSRDTGLPGCQSSLLRQDLGL. Lys181 is covalently cross-linked (Glycyl lysine isopeptide (Lys-Gly) (interchain with G-Cter in SUMO2)). The interval 182-196 is interaction with RUNX1T1; it reads KVRKVPPGLPSSVYA. Residues 282–306 are compositionally biased toward polar residues; sequence VSPTDINTSLPPMSSFHRGSTSSSP. Phosphothreonine is present on Thr313. Ser333 bears the Phosphoserine mark. Disordered stretches follow at residues 349–395 and 462–580; these read PDHT…SLHS and SASM…ERRM. The span at 352-363 shows a compositional bias: low complexity; sequence TSSSFPSNPSTP. Composition is skewed to polar residues over residues 364-376 and 383-395; these read VGSP…TSQW and APSS…SLHS. The segment covering 481–492 has biased composition (low complexity); that stretch reads SVLSSTVTTSST. Residues 506–517 are compositionally biased toward polar residues; sequence LQSQSGTVVTTE. Basic and acidic residues-rich tracts occupy residues 518–530 and 536–551; these read IKTE…ENLH and DDMK…DIKV. Residue Lys519 forms a Glycyl lysine isopeptide (Lys-Gly) (interchain with G-Cter in SUMO2) linkage. The residue at position 540 (Ser540) is a Phosphoserine. Lys550 participates in a covalent cross-link: Glycyl lysine isopeptide (Lys-Gly) (interchain with G-Cter in SUMO2). Residue Thr557 is modified to Phosphothreonine. Phosphoserine occurs at positions 558 and 559. Basic and acidic residues predominate over residues 568–580; the sequence is PEQKIEREKERRM. In terms of domain architecture, bHLH spans 577-630; the sequence is ERRMANNARERLRVRDINEAFKELGRMCQLHLKSEKPQTKLLILHQAVAVILSL. Residues Lys609 and Lys653 each participate in a glycyl lysine isopeptide (Lys-Gly) (interchain with G-Cter in SUMO2) cross-link. A class A specific domain region spans residues 632-655; it reads QQVRERNLNPKAACLKRREEEKVS. A disordered region spans residues 651–682; sequence EEKVSAVSAEPPTTLPGTHPGLSETTNPMGHM. Low complexity predominate over residues 661–672; it reads PPTTLPGTHPGL. Positions 673-682 are enriched in polar residues; that stretch reads SETTNPMGHM.

In terms of assembly, efficient DNA binding requires dimerization with another bHLH protein. Forms homo- or heterooligomers with myogenin, E12 and ITF2 proteins. Interacts with PTF1A. Interacts with NEUROD2. Interacts with RUNX1T1. Interacts with AML1-MTG8/ETO (via nervy homology region 2 in oligomerized form). Interacts with BHLHA9. In terms of tissue distribution, expressed in several tissues and cell types including skeletal muscle, thymus, and a B-cell line.

Its subcellular location is the nucleus. Functionally, transcriptional regulator. Involved in the initiation of neuronal differentiation. Activates transcription by binding to the E box (5'-CANNTG-3'). May be involved in the functional network that regulates the development of the GnRH axis. In Homo sapiens (Human), this protein is Transcription factor 12 (TCF12).